The chain runs to 881 residues: Leucine--tRNA ligase (881 aa).

A 'HIGH' region motif is present at residues 48 to 58 (PYPSGKLHMGH). Positions 638–642 (KMSKS) match the 'KMSKS' region motif. An ATP-binding site is contributed by Lys641.

The protein belongs to the class-I aminoacyl-tRNA synthetase family.

It localises to the cytoplasm. The enzyme catalyses tRNA(Leu) + L-leucine + ATP = L-leucyl-tRNA(Leu) + AMP + diphosphate. The protein is Leucine--tRNA ligase of Janthinobacterium sp. (strain Marseille) (Minibacterium massiliensis).